We begin with the raw amino-acid sequence, 92 residues long: MHRSLAGSAVLMLLLLFALGNFVGVQPGLVTRDADNGQLMDNRRNLRLERKTMSLFKSLDKRADCSTYCFGMGICQSGCYCGPGHACMPNGR.

The N-terminal stretch at 1 to 20 is a signal peptide; the sequence is MHRSLAGSAVLMLLLLFALG. Positions 21–62 are excised as a propeptide; that stretch reads NFVGVQPGLVTRDADNGQLMDNRRNLRLERKTMSLFKSLDKR. Disulfide bonds link Cys-65–Cys-79, Cys-69–Cys-81, and Cys-75–Cys-87. Asn-90 is modified (asparagine amide).

Belongs to the conotoxin P superfamily. Expressed by the venom duct.

The protein resides in the secreted. Probable neurotoxin that inhibits ion channels. This chain is Conotoxin Im9.4, found in Conus imperialis (Imperial cone).